A 545-amino-acid chain; its full sequence is Tripartite motif-containing protein 55 (545 aa).

An RING-type zinc finger spans residues 26 to 82 (CPICLEMFTKPVVILPCQHNLCRKCASDIFQASNPYLPTRGGTTVASGGRFRCPSCR). The B box-type zinc finger occupies 119 to 161 (LDQPMCEEHEEERINIYCLNCEVPTCSLCKVFGAHKDCQVAPL). C124, H127, C147, and H153 together coordinate Zn(2+). A coiled-coil region spans residues 219–258 (YSILEERKTEMTQAITRTQEEKLEHVRTLIRKYSDHLENV). In terms of domain architecture, COS spans 269-327 (MDEPEMAVFLQNAKTLLQKITEASKAFQMEKIEQGYEIMNNFTVNLNREEKIIREIDFS). 2 disordered regions span residues 324–378 (IDFS…SELA) and 406–528 (LVTQ…GADS). The span at 328-355 (REEEDEDDEGEVDEEGEGEDAVEVEEAE) shows a compositional bias: acidic residues. Low complexity-rich tracts occupy residues 417-426 (SQQTTQSETS) and 469-493 (SAAE…AAVS). Residues 495 to 506 (KESSSTAATSQI) are compositionally biased toward polar residues. The span at 510–520 (ASSPQGQAAAL) shows a compositional bias: low complexity.

As to quaternary structure, homooligomer and heterooligomer. Interacts with titin/TTN. Interacts with myosins. Interacts with SQSTM1 and NBR1. Probably interacts with TRIM63 and TRIM54. Targeted for degradation through the proteasomal and lysosomal pathways in the presence of SUMO3.

The protein resides in the nucleus. It is found in the cytoplasm. It carries out the reaction S-ubiquitinyl-[E2 ubiquitin-conjugating enzyme]-L-cysteine + [acceptor protein]-L-lysine = [E2 ubiquitin-conjugating enzyme]-L-cysteine + N(6)-ubiquitinyl-[acceptor protein]-L-lysine.. Its function is as follows. E3 ubiquitin ligase that plays an important role in regulating cardiac development and contractility, muscle growth, metabolism, and fiber-type differentiation. Acts as a critical factor that regulates cardiomyocyte size during development in concert with TRIM63 by regulating E2F1-mediated gene expression. Plays a role in apoptosis induction in cardiomyocytes by promoting ubiquitination of the DUSP1 phosphatase. Promotes non-canonical NF-kappa-B signaling and B-cell-mediated immune responses by mediating NFKB2 'Lys-48'-linked ubiquitination and processing. In turn, NFKB2 is further processed by valosin-containing protein/VCP, an ATPase that mediates ubiquitin-dependent protein degradation by the proteasome. May play a role in preventing macrophages from producing inflammatory factors and migrating by downregulating the level of nuclear NF-kappa-B subunit RELA. Also modifies PPARG via polyubiquitination and accelerates PPARG proteasomal degradation to inhibit its activity. The sequence is that of Tripartite motif-containing protein 55 (Trim55) from Rattus norvegicus (Rat).